We begin with the raw amino-acid sequence, 688 residues long: Translation initiation factor IF-2 (688 aa).

Composition is skewed to basic and acidic residues over residues 53-62 and 86-95; these read GKEKSEKTKE and KRDDKNEKVN. A disordered region spans residues 53 to 100; that stretch reads GKEKSEKTKEEDDEIETTAKNPIKESMNNKKSNKRDDKNEKVNTENAE. In terms of domain architecture, tr-type G spans 187 to 354; it reads KRSPIITVMG…MILLSSEILE (168 aa). The interval 196 to 203 is G1; that stretch reads GHVDHGKT. 196–203 is a GTP binding site; it reads GHVDHGKT. Residues 221–225 form a G2 region; sequence GITQH. A G3 region spans residues 242 to 245; that stretch reads DTPG. GTP contacts are provided by residues 242–246 and 296–299; these read DTPGH and NKID. The interval 296 to 299 is G4; sequence NKID. Residues 332 to 334 form a G5 region; the sequence is SAH.

The protein belongs to the TRAFAC class translation factor GTPase superfamily. Classic translation factor GTPase family. IF-2 subfamily.

Its subcellular location is the cytoplasm. In terms of biological role, one of the essential components for the initiation of protein synthesis. Protects formylmethionyl-tRNA from spontaneous hydrolysis and promotes its binding to the 30S ribosomal subunits. Also involved in the hydrolysis of GTP during the formation of the 70S ribosomal complex. This Clostridium botulinum (strain Kyoto / Type A2) protein is Translation initiation factor IF-2.